Here is a 189-residue protein sequence, read N- to C-terminus: Chitin synthase 1 (189 aa).

This sequence belongs to the chitin synthase family.

The protein resides in the cell membrane. It carries out the reaction [(1-&gt;4)-N-acetyl-beta-D-glucosaminyl](n) + UDP-N-acetyl-alpha-D-glucosamine = [(1-&gt;4)-N-acetyl-beta-D-glucosaminyl](n+1) + UDP + H(+). Its function is as follows. Polymerizes chitin, a structural polymer of the cell wall and septum, by transferring the sugar moiety of UDP-GlcNAc to the non-reducing end of the growing chitin polymer. This Exophiala exophialae (Black yeast-like fungus) protein is Chitin synthase 1 (CHS1).